Consider the following 258-residue polypeptide: MLILISPAKTLDYQSPLTTTRYTLPELLDNSQQLIHEARKLTPPQISTLMRISDKLAGINAARFHDWQPDFTPANARQAILAFKGDVYTGLQAETFSEDDFDFAQQHLRMLSGLYGVLRPLDLMQPYRLEMGIRLENARGKDLYQFWGDIITNKLNEALAAQGDNVVINLASDEYFKSVKPKKLNAEIIKPVFLDEKNGKFKIISFYAKKARGLMSRFIIENRLTKPEQLTGFNSEGYFFDEASSSNGELVFKRYEQR.

This sequence belongs to the UPF0246 family.

The chain is UPF0246 protein YaaA from Shigella boydii serotype 18 (strain CDC 3083-94 / BS512).